The following is a 729-amino-acid chain: Fatty acid oxidation complex subunit alpha (729 aa).

The tract at residues 1-189 is enoyl-CoA hydratase/isomerase; it reads MLYKGDTLYL…KIGLVDGVVK (189 aa). Substrate is bound at residue Asp296. A 3-hydroxyacyl-CoA dehydrogenase region spans residues 311 to 729; sequence ETPKQAAVLG…ARPVGDLKTA (419 aa). Residues Met324, Asp343, 400–402, Lys407, and Ser429 each bind NAD(+); that span reads VVE. The For 3-hydroxyacyl-CoA dehydrogenase activity role is filled by His450. Residue Asn453 participates in NAD(+) binding. Positions 500 and 660 each coordinate substrate. A disordered region spans residues 708–729; sequence RHNEPYYPPVEPARPVGDLKTA.

The protein in the N-terminal section; belongs to the enoyl-CoA hydratase/isomerase family. This sequence in the C-terminal section; belongs to the 3-hydroxyacyl-CoA dehydrogenase family. As to quaternary structure, heterotetramer of two alpha chains (FadB) and two beta chains (FadA).

It catalyses the reaction a (3S)-3-hydroxyacyl-CoA + NAD(+) = a 3-oxoacyl-CoA + NADH + H(+). The enzyme catalyses a (3S)-3-hydroxyacyl-CoA = a (2E)-enoyl-CoA + H2O. It carries out the reaction a 4-saturated-(3S)-3-hydroxyacyl-CoA = a (3E)-enoyl-CoA + H2O. The catalysed reaction is (3S)-3-hydroxybutanoyl-CoA = (3R)-3-hydroxybutanoyl-CoA. It catalyses the reaction a (3Z)-enoyl-CoA = a 4-saturated (2E)-enoyl-CoA. The enzyme catalyses a (3E)-enoyl-CoA = a 4-saturated (2E)-enoyl-CoA. Its pathway is lipid metabolism; fatty acid beta-oxidation. Its function is as follows. Involved in the aerobic and anaerobic degradation of long-chain fatty acids via beta-oxidation cycle. Catalyzes the formation of 3-oxoacyl-CoA from enoyl-CoA via L-3-hydroxyacyl-CoA. It can also use D-3-hydroxyacyl-CoA and cis-3-enoyl-CoA as substrate. In Escherichia coli O81 (strain ED1a), this protein is Fatty acid oxidation complex subunit alpha.